The sequence spans 384 residues: Dual-specificity RNA methyltransferase RlmN (384 aa).

The active-site Proton acceptor is the glutamate 105. A Radical SAM core domain is found at glutamate 111–aspartate 350. Cysteine 118 and cysteine 355 are joined by a disulfide. Positions 125, 129, and 132 each coordinate [4Fe-4S] cluster. Residues glycine 179 to glutamate 180, serine 211, serine 233 to histidine 235, and asparagine 312 contribute to the S-adenosyl-L-methionine site. The S-methylcysteine intermediate role is filled by cysteine 355.

Belongs to the radical SAM superfamily. RlmN family. The cofactor is [4Fe-4S] cluster.

The protein localises to the cytoplasm. The enzyme catalyses adenosine(2503) in 23S rRNA + 2 reduced [2Fe-2S]-[ferredoxin] + 2 S-adenosyl-L-methionine = 2-methyladenosine(2503) in 23S rRNA + 5'-deoxyadenosine + L-methionine + 2 oxidized [2Fe-2S]-[ferredoxin] + S-adenosyl-L-homocysteine. It catalyses the reaction adenosine(37) in tRNA + 2 reduced [2Fe-2S]-[ferredoxin] + 2 S-adenosyl-L-methionine = 2-methyladenosine(37) in tRNA + 5'-deoxyadenosine + L-methionine + 2 oxidized [2Fe-2S]-[ferredoxin] + S-adenosyl-L-homocysteine. Specifically methylates position 2 of adenine 2503 in 23S rRNA and position 2 of adenine 37 in tRNAs. m2A2503 modification seems to play a crucial role in the proofreading step occurring at the peptidyl transferase center and thus would serve to optimize ribosomal fidelity. The chain is Dual-specificity RNA methyltransferase RlmN from Escherichia coli O157:H7.